A 312-amino-acid polypeptide reads, in one-letter code: uncharacterized protein (312 aa).

The next 10 helical transmembrane spans lie at 13 to 33 (AAGT…SIWI), 45 to 65 (AVLL…FLIY), 81 to 101 (ACGA…IGLN), 105 to 125 (AMVE…FTAC), 133 to 153 (IQDL…LGGW), 162 to 182 (MIGA…LVLS), 198 to 218 (GMTA…AAGM), 229 to 249 (MYGL…VLML), 260 to 280 (AAAI…LFLG), and 283 to 303 (LGLI…GMEY). The EamA domain maps to 173–303 (AVYAGYLVLS…VFFVITGMEY (131 aa)).

This sequence belongs to the EamA transporter family.

It is found in the cell membrane. This is an uncharacterized protein from Bacillus subtilis (strain 168).